An 853-amino-acid chain; its full sequence is DNA (cytosine-5)-methyltransferase 3B (853 aa).

Residues 1–20 show a composition bias toward basic and acidic residues; sequence MKGDTRHLNGEEDAGGREDS. The disordered stretch occupies residues 1 to 218; that stretch reads MKGDTRHLNG…SGDGDSSEYQ (218 aa). An interaction with DNMT1 and DNMT3A region spans residues 1–298; sequence MKGDTRHLNG…LATFNKLVSY (298 aa). Positions 72–81 are enriched in acidic residues; that stretch reads GDGDGEDGDG. Serine 82 carries the post-translational modification Phosphoserine. Lysine 89 is covalently cross-linked (Glycyl lysine isopeptide (Lys-Gly) (interchain with G-Cter in SUMO2)). At threonine 96 the chain carries Phosphothreonine. Serine 100 and serine 110 each carry phosphoserine. Positions 115–130 are enriched in basic residues; sequence ERHRPSPRSTRGRQGR. 4 positions are modified to phosphoserine: serine 136, serine 195, serine 202, and serine 209. A compositionally biased stretch (polar residues) spans 179–199; sequence GTPQSSSTPYARLAQDSQQGG. Residues 225-283 form the PWWP domain; that stretch reads IGDLVWGKIKGFSWWPAMVVSWKATSKRQAMSGMRWVQWFGDGKFSEVSADKLVALGLF. The segment at 341–423 is disordered; that stretch reads KPTGIEGLKP…DQSREQMASD (83 aa). Basic and acidic residues-rich tracts occupy residues 368-385 and 407-417; these read RKLESRKYENKTRRRTAD and GKDRGDEDQSR. A Citrulline modification is found at arginine 410. The 133-residue stretch at 423 to 555 folds into the ADD domain; that stretch reads DVANNKSSLE…LQAFFTSDTG (133 aa). The GATA-type; atypical zinc finger occupies 434–464; it reads GCLSCGRKNPVSFHPLFEGGLCQTCRDRFLE. The tract at residues 435 to 527 is interaction with the PRC2/EED-EZH2 complex; the sequence is CLSCGRKNPV…LQEPWSCYMC (93 aa). The segment at 475–531 adopts a PHD-type; atypical zinc-finger fold; it reads QSYCTVCCEGRELLLCSNTSCCRCFCVECLEVLVGTGTAAEAKLQEPWSCYMCLPQR. One can recognise an SAM-dependent MTase C5-type domain in the interval 575–853; the sequence is IRVLSLFDGI…APLKDYFACE (279 aa). Residues 582–586 and glutamate 605 each bind S-adenosyl-L-methionine; that span reads DGIAT. Lysine 617 is covalently cross-linked (Glycyl lysine isopeptide (Lys-Gly) (interchain with G-Cter in SUMO2)). 627–629 provides a ligand contact to S-adenosyl-L-methionine; the sequence is DVR. Cysteine 651 is an active-site residue. Residue 832–834 coordinates S-adenosyl-L-methionine; the sequence is RSW.

The protein belongs to the class I-like SAM-binding methyltransferase superfamily. C5-methyltransferase family. As to quaternary structure, interacts with BAZ2A/TIP5, SUV39H1 and CBX4. Interacts with UHRF1. Interacts with DNMT1 and DNMT3A, SETDB1, UBL1, UBE2I9 and ZHX1. Interacts with the PRC2/EED-EZH2 complex. Post-translationally, sumoylated. Citrullinated by PADI4. In terms of tissue distribution, ubiquitous; highly expressed in fetal liver, heart, kidney, placenta, and at lower levels in spleen, colon, brain, liver, small intestine, lung, peripheral blood mononuclear cells, and skeletal muscle. Isoform 1 is expressed in all tissues except brain, skeletal muscle and PBMC, 3 is ubiquitous, 4 is expressed in all tissues except brain, skeletal muscle, lung and prostate and 5 is detectable only in testis and at very low level in brain and prostate.

The protein resides in the nucleus. The catalysed reaction is a 2'-deoxycytidine in DNA + S-adenosyl-L-methionine = a 5-methyl-2'-deoxycytidine in DNA + S-adenosyl-L-homocysteine + H(+). Activated by binding to the regulatory factor DNMT3L. Its function is as follows. Required for genome-wide de novo methylation and is essential for the establishment of DNA methylation patterns during development. DNA methylation is coordinated with methylation of histones. May preferentially methylates nucleosomal DNA within the nucleosome core region. May function as transcriptional co-repressor by associating with CBX4 and independently of DNA methylation. Seems to be involved in gene silencing. In association with DNMT1 and via the recruitment of CTCFL/BORIS, involved in activation of BAG1 gene expression by modulating dimethylation of promoter histone H3 at H3K4 and H3K9. Isoforms 4 and 5 are probably not functional due to the deletion of two conserved methyltransferase motifs. Functions as a transcriptional corepressor by associating with ZHX1. Required for DUX4 silencing in somatic cells. This Homo sapiens (Human) protein is DNA (cytosine-5)-methyltransferase 3B (DNMT3B).